The chain runs to 501 residues: Lysine--tRNA ligase (501 aa).

Residues Glu411 and Glu418 each coordinate Mg(2+).

The protein belongs to the class-II aminoacyl-tRNA synthetase family. As to quaternary structure, homodimer. Requires Mg(2+) as cofactor.

Its subcellular location is the cytoplasm. The enzyme catalyses tRNA(Lys) + L-lysine + ATP = L-lysyl-tRNA(Lys) + AMP + diphosphate. This chain is Lysine--tRNA ligase, found in Aliivibrio fischeri (strain ATCC 700601 / ES114) (Vibrio fischeri).